Consider the following 561-residue polypeptide: Arginine--tRNA ligase (561 aa).

The 'HIGH' region motif lies at 135–145 (ANPTGLLHMGN).

The protein belongs to the class-I aminoacyl-tRNA synthetase family. In terms of assembly, monomer.

Its subcellular location is the cytoplasm. The enzyme catalyses tRNA(Arg) + L-arginine + ATP = L-arginyl-tRNA(Arg) + AMP + diphosphate. The polypeptide is Arginine--tRNA ligase (Desulfitobacterium hafniense (strain DSM 10664 / DCB-2)).